The chain runs to 610 residues: Elongation factor 4 (610 aa).

The tr-type G domain occupies 11–193 (EKIRNFSIIA…QIVEKVPAPS (183 aa)). GTP contacts are provided by residues 23–28 (DHGKST) and 140–143 (NKID).

The protein belongs to the TRAFAC class translation factor GTPase superfamily. Classic translation factor GTPase family. LepA subfamily.

The protein localises to the cell membrane. The enzyme catalyses GTP + H2O = GDP + phosphate + H(+). In terms of biological role, required for accurate and efficient protein synthesis under certain stress conditions. May act as a fidelity factor of the translation reaction, by catalyzing a one-codon backward translocation of tRNAs on improperly translocated ribosomes. Back-translocation proceeds from a post-translocation (POST) complex to a pre-translocation (PRE) complex, thus giving elongation factor G a second chance to translocate the tRNAs correctly. Binds to ribosomes in a GTP-dependent manner. The chain is Elongation factor 4 from Streptococcus uberis (strain ATCC BAA-854 / 0140J).